Here is a 106-residue protein sequence, read N- to C-terminus: Ribosomal processing cysteine protease Prp (106 aa).

His-22 (proton donor) is an active-site residue. The active-site Nucleophile is Cys-34.

Belongs to the Prp family. In terms of assembly, homodimer. A mutant protein unable to cleave bL27 copurifies with its substrate.

Not inhibited by short peptide analogs; a 6-mer inhibits only 20% while a 13-mer inhibits 63%. Inhibited by Ac-KLNLQFF-CH(2) which binds covalantly to Cys-34. Inhibited by mersalyl acid (C13H18HgNO6). Its function is as follows. An essential cysteine protease that cleaves the N-terminal 9 amino acids from ribosomal protein bL27. Also acts as an N-terminal protease on the major capsid and scaffold assembly proteins of bacteriophage 80alpha. Cleavage of the N-terminus of bL27 (and thus this enzyme) is essential for growth; it cannot be replaced by a 'pre-cleaved' or non-cleavable form of bL27. Might serve a chaperone function during ribosome assembly. This is Ribosomal processing cysteine protease Prp from Staphylococcus aureus (strain NCTC 8325 / PS 47).